We begin with the raw amino-acid sequence, 206 residues long: N-(5'-phosphoribosyl)anthranilate isomerase (206 aa).

Belongs to the TrpF family.

The enzyme catalyses N-(5-phospho-beta-D-ribosyl)anthranilate = 1-(2-carboxyphenylamino)-1-deoxy-D-ribulose 5-phosphate. Its pathway is amino-acid biosynthesis; L-tryptophan biosynthesis; L-tryptophan from chorismate: step 3/5. The polypeptide is N-(5'-phosphoribosyl)anthranilate isomerase (Pseudomonas putida (strain W619)).